A 396-amino-acid polypeptide reads, in one-letter code: S-adenosylmethionine synthase (396 aa).

An ATP-binding site is contributed by histidine 16. Aspartate 18 serves as a coordination point for Mg(2+). Residue glutamate 44 coordinates K(+). The L-methionine site is built by glutamate 57 and glutamine 100. The flexible loop stretch occupies residues 100-110; sequence QSKDIALGVDK. ATP contacts are provided by residues 176-178, 243-244, aspartate 252, 258-259, alanine 275, and lysine 279; these read DGK, RF, and RK. Aspartate 252 contacts L-methionine. Lysine 283 contributes to the L-methionine binding site.

The protein belongs to the AdoMet synthase family. As to quaternary structure, homotetramer; dimer of dimers. It depends on Mg(2+) as a cofactor. K(+) is required as a cofactor.

It localises to the cytoplasm. It catalyses the reaction L-methionine + ATP + H2O = S-adenosyl-L-methionine + phosphate + diphosphate. It functions in the pathway amino-acid biosynthesis; S-adenosyl-L-methionine biosynthesis; S-adenosyl-L-methionine from L-methionine: step 1/1. Functionally, catalyzes the formation of S-adenosylmethionine (AdoMet) from methionine and ATP. The overall synthetic reaction is composed of two sequential steps, AdoMet formation and the subsequent tripolyphosphate hydrolysis which occurs prior to release of AdoMet from the enzyme. The sequence is that of S-adenosylmethionine synthase from Lachnoclostridium phytofermentans (strain ATCC 700394 / DSM 18823 / ISDg) (Clostridium phytofermentans).